We begin with the raw amino-acid sequence, 205 residues long: Urease accessory protein UreG (205 aa).

Residue 10–17 (GPVGSGKT) coordinates GTP.

It belongs to the SIMIBI class G3E GTPase family. UreG subfamily. In terms of assembly, homodimer. UreD, UreF and UreG form a complex that acts as a GTP-hydrolysis-dependent molecular chaperone, activating the urease apoprotein by helping to assemble the nickel containing metallocenter of UreC. The UreE protein probably delivers the nickel.

It is found in the cytoplasm. In terms of biological role, facilitates the functional incorporation of the urease nickel metallocenter. This process requires GTP hydrolysis, probably effectuated by UreG. The polypeptide is Urease accessory protein UreG (Corynebacterium urealyticum (strain ATCC 43042 / DSM 7109)).